A 158-amino-acid chain; its full sequence is NAD(P)H-quinone oxidoreductase subunit J, chloroplastic (158 aa).

Belongs to the complex I 30 kDa subunit family. As to quaternary structure, NDH is composed of at least 16 different subunits, 5 of which are encoded in the nucleus.

It localises to the plastid. It is found in the chloroplast thylakoid membrane. It catalyses the reaction a plastoquinone + NADH + (n+1) H(+)(in) = a plastoquinol + NAD(+) + n H(+)(out). The catalysed reaction is a plastoquinone + NADPH + (n+1) H(+)(in) = a plastoquinol + NADP(+) + n H(+)(out). In terms of biological role, NDH shuttles electrons from NAD(P)H:plastoquinone, via FMN and iron-sulfur (Fe-S) centers, to quinones in the photosynthetic chain and possibly in a chloroplast respiratory chain. The immediate electron acceptor for the enzyme in this species is believed to be plastoquinone. Couples the redox reaction to proton translocation, and thus conserves the redox energy in a proton gradient. This chain is NAD(P)H-quinone oxidoreductase subunit J, chloroplastic, found in Panax ginseng (Korean ginseng).